The following is a 277-amino-acid chain: Glycerol-3-phosphate acyltransferase (277 aa).

The next 5 membrane-spanning stretches (helical) occupy residues 3–23 (FFIFLILVGYLMGSINSAIIV), 55–75 (IMVMVFDALKGILPVILAKLL), 79–99 (PVTVAFTALAAVVGHMYPVFF), 111–131 (IGALLAFHFVIGVMVAATWLL), and 155–175 (LILVGNLNIFPPLFMITILVL). The disordered stretch occupies residues 231–277 (KTEQAEAVKKPKAKKATTKAKKTTSKEETAKKPKSTKPKTKTVKEKE). Basic residues-rich tracts occupy residues 240-253 (KPKAKKATTKAKKT) and 262-271 (KPKSTKPKTK).

The protein belongs to the PlsY family. As to quaternary structure, probably interacts with PlsX.

It is found in the cell inner membrane. The enzyme catalyses an acyl phosphate + sn-glycerol 3-phosphate = a 1-acyl-sn-glycero-3-phosphate + phosphate. Its pathway is lipid metabolism; phospholipid metabolism. Its function is as follows. Catalyzes the transfer of an acyl group from acyl-phosphate (acyl-PO(4)) to glycerol-3-phosphate (G3P) to form lysophosphatidic acid (LPA). This enzyme utilizes acyl-phosphate as fatty acyl donor, but not acyl-CoA or acyl-ACP. This Legionella pneumophila (strain Lens) protein is Glycerol-3-phosphate acyltransferase.